Here is a 297-residue protein sequence, read N- to C-terminus: N-acetylmuramic acid 6-phosphate etherase (297 aa).

An SIS domain is found at A56–K219. E84 serves as the catalytic Proton donor. The active site involves E115.

This sequence belongs to the GCKR-like family. MurNAc-6-P etherase subfamily. Homodimer.

It catalyses the reaction N-acetyl-D-muramate 6-phosphate + H2O = N-acetyl-D-glucosamine 6-phosphate + (R)-lactate. The protein operates within amino-sugar metabolism; N-acetylmuramate degradation. Its function is as follows. Specifically catalyzes the cleavage of the D-lactyl ether substituent of MurNAc 6-phosphate, producing GlcNAc 6-phosphate and D-lactate. The protein is N-acetylmuramic acid 6-phosphate etherase of Lactococcus lactis subsp. lactis (strain IL1403) (Streptococcus lactis).